A 352-amino-acid polypeptide reads, in one-letter code: Ion-translocating oxidoreductase complex subunit D (352 aa).

Transmembrane regions (helical) follow at residues 20-40, 42-62, 69-91, and 123-143; these read IMLL…WFFG, GTLF…AIVL, VASH…SIPP, and PAMI…TSWL. At Thr-187 the chain carries FMN phosphoryl threonine. A run of 5 helical transmembrane segments spans residues 215-235, 242-262, 267-287, 301-321, and 322-342; these read LAGV…VFLL, WHIP…GWLF, LASP…FFIL, LIFG…GGYP, and DGVA…DYYT.

Belongs to the NqrB/RnfD family. In terms of assembly, the complex is composed of six subunits: RsxA, RsxB, RsxC, RsxD, RsxE and RsxG. FMN serves as cofactor.

The protein resides in the cell inner membrane. Functionally, part of a membrane-bound complex that couples electron transfer with translocation of ions across the membrane. Required to maintain the reduced state of SoxR. The protein is Ion-translocating oxidoreductase complex subunit D of Salmonella paratyphi B (strain ATCC BAA-1250 / SPB7).